The following is a 94-amino-acid chain: Trp operon repressor homolog (94 aa).

Residues 58 to 81 mediate DNA binding; sequence QREIAEKYGVSIAQITRGSNALKG.

This sequence belongs to the TrpR family. In terms of assembly, homodimer.

Its subcellular location is the cytoplasm. In terms of biological role, this protein is an aporepressor. When complexed with L-tryptophan it binds the operator region of the trp operon and prevents the initiation of transcription. This chain is Trp operon repressor homolog, found in Chlamydia trachomatis serovar A (strain ATCC VR-571B / DSM 19440 / HAR-13).